The sequence spans 145 residues: Hemoglobin subunit beta (145 aa).

Residues 1-145 (MLTSEEKAAV…VANALAHRYH (145 aa)) enclose the Globin domain. Threonine 11 bears the Phosphothreonine mark. The residue at position 58 (lysine 58) is an N6-acetyllysine. Position 62 (histidine 62) interacts with heme b. Position 81 is an N6-acetyllysine (lysine 81). Heme b is bound at residue histidine 91. Cysteine 92 is subject to S-nitrosocysteine.

Belongs to the globin family. As to quaternary structure, heterotetramer of two alpha chains and two beta chains. As to expression, red blood cells.

In terms of biological role, involved in oxygen transport from the lung to the various peripheral tissues. In Rangifer tarandus (Reindeer), this protein is Hemoglobin subunit beta (HBB).